A 73-amino-acid polypeptide reads, in one-letter code: UPF0057 membrane protein At4g30650 (73 aa).

Transmembrane regions (helical) follow at residues 4–24 (NMEV…GVCL) and 37–57 (LVLT…VIVF).

The protein belongs to the UPF0057 (PMP3) family.

It localises to the membrane. In Arabidopsis thaliana (Mouse-ear cress), this protein is UPF0057 membrane protein At4g30650.